We begin with the raw amino-acid sequence, 308 residues long: Secreted frizzled-related protein 1 (308 aa).

The N-terminal stretch at 1–25 (MGGGRWAAAGALLALAAGLLAAGSA) is a signal peptide. One can recognise an FZ domain in the interval 47-163 (TKPPQCVDIP…FPEGDVCIAM (117 aa)). Disulfide bonds link Cys52-Cys115, Cys62-Cys108, Cys99-Cys134, Cys123-Cys160, and Cys127-Cys151. N-linked (GlcNAc...) asparagine glycosylation is present at Asn167. 3 disulfide bridges follow: Cys180–Cys250, Cys183–Cys252, and Cys197–Cys300. Residues 180-300 (CPPCDNELKS…FMKKMKNHEC (121 aa)) enclose the NTR domain.

This sequence belongs to the secreted frizzled-related protein (sFRP) family. Interacts with WNT1, WNT2, WNT4, WNT8, MYOC and FRZD6. Highest levels in aortic endothelium, heart, spleen and eye. Lower levels in lung, brain and kidney. Weak expression in liver, skeletal muscle and the medial layer of the aorta. In the cortical brain, localized to neurons and small blood vessels. In the retina, localized to the inner and outer nuclear layers with high expression in the neuronal cell bodies. In the heart, restricted to myocytes. In lung, highest expression found in the epithelium of terminal bronchioles. In kidney, localized to the epithelium of collecting ducts of the medulla and, in spleen, expression restricted to the red pulp in cells associated with the sinuses.

The protein resides in the secreted. In terms of biological role, soluble frizzled-related proteins (sFRPS) function as modulators of Wnt signaling through direct interaction with Wnts. They have a role in regulating cell growth and differentiation in specific cell types. SFRP1 decreases intracellular beta-catenin levels. Has antiproliferative effects on vascular cells, in vitro and in vivo, and can induce, in vivo, an angiogenic response. In vascular cell cycle, delays the G1 phase and entry into the S phase. In kidney development, inhibits tubule formation and bud growth in metanephroi. Inhibits WNT1/WNT4-mediated TCF-dependent transcription. This is Secreted frizzled-related protein 1 (SFRP1) from Bos taurus (Bovine).